The following is a 91-amino-acid chain: N(2)-fixation sustaining protein CowN (91 aa).

It belongs to the CowN family.

Functionally, is required to sustain N(2)-dependent growth in the presence of low levels of carbon monoxide (CO). Probably acts by protecting the N(2) fixation ability of the nitrogenase complex, which is inactivated in the presence of CO. In Beijerinckia indica subsp. indica (strain ATCC 9039 / DSM 1715 / NCIMB 8712), this protein is N(2)-fixation sustaining protein CowN.